A 158-amino-acid chain; its full sequence is Cytochrome c-type biogenesis protein CcmE (158 aa).

Polar residues predominate over residues 1 to 11 (MTRPDSGSSPA). Positions 1-20 (MTRPDSGSSPAPLSEARRRK) are disordered. Residues 1–23 (MTRPDSGSSPAPLSEARRRKRNP) are Cytoplasmic-facing. A helical; Signal-anchor for type II membrane protein membrane pass occupies residues 24-44 (LPTVLGITALLGLAGFIAFGN). The Extracellular portion of the chain corresponds to 45-158 (LNKSLEYFVT…ELRDLLEQSE (114 aa)). 2 residues coordinate heme: His137 and Tyr141.

It belongs to the CcmE/CycJ family.

Its subcellular location is the cell membrane. Its function is as follows. Heme chaperone required for the biogenesis of c-type cytochromes. Transiently binds heme delivered by CcmC and transfers the heme to apo-cytochromes in a process facilitated by CcmF and CcmH. This is Cytochrome c-type biogenesis protein CcmE from Deinococcus deserti (strain DSM 17065 / CIP 109153 / LMG 22923 / VCD115).